The chain runs to 341 residues: Tetraacyldisaccharide 4'-kinase (341 aa).

54–61 is a binding site for ATP; sequence TVGGAGKT.

It belongs to the LpxK family.

It carries out the reaction a lipid A disaccharide + ATP = a lipid IVA + ADP + H(+). It functions in the pathway glycolipid biosynthesis; lipid IV(A) biosynthesis; lipid IV(A) from (3R)-3-hydroxytetradecanoyl-[acyl-carrier-protein] and UDP-N-acetyl-alpha-D-glucosamine: step 6/6. Functionally, transfers the gamma-phosphate of ATP to the 4'-position of a tetraacyldisaccharide 1-phosphate intermediate (termed DS-1-P) to form tetraacyldisaccharide 1,4'-bis-phosphate (lipid IVA). This Brucella suis (strain ATCC 23445 / NCTC 10510) protein is Tetraacyldisaccharide 4'-kinase.